Consider the following 913-residue polypeptide: Trafficking kinesin-binding protein 2 (913 aa).

Residues 11–21 (SQTGEENLMSS) show a composition bias toward polar residues. A disordered region spans residues 11–31 (SQTGEENLMSSNHRDSESITD). One can recognise an HAP1 N-terminal domain in the interval 48–353 (EEQLPQYKLR…QEEIKELRNK (306 aa)). A coiled-coil region spans residues 134–355 (QALLKRNHVL…EIKELRNKAG (222 aa)). The interval 359–507 (HLCFSQAYGV…KQFFAEEWER (149 aa)) is interaction with HGS. The tract at residues 442-478 (ESGVQQTEDKTLPNQGSSTEVPGNSHPRDPPGLPEDS) is disordered. Over residues 453–463 (LPNQGSSTEVP) the composition is skewed to polar residues. The stretch at 502 to 519 (AEEWERKLQILAEQEEEV) forms a coiled coil. Low complexity-rich tracts occupy residues 688-704 (SSGFPSLSCGSSAGSAS) and 780-789 (PSQSPCSSPV). Disordered stretches follow at residues 688 to 707 (SSGFPSLSCGSSAGSASNTA) and 769 to 790 (ALATPSTPPNSPSQSPCSSPVP).

The protein belongs to the milton family. In terms of assembly, interacts with RHOT1/Miro-1 and RHOT2/Miro-2. Interacts with GABA-A receptor and O-GlcNAc transferase. Interacts with HGS. O-glycosylated. Present in heart and brain (at protein level).

The protein localises to the cytoplasm. It is found in the early endosome. It localises to the mitochondrion. May regulate endosome-to-lysosome trafficking of membrane cargo, including EGFR. This chain is Trafficking kinesin-binding protein 2 (Trak2), found in Rattus norvegicus (Rat).